The primary structure comprises 51 residues: Large ribosomal subunit protein eL39 (51 aa).

It belongs to the eukaryotic ribosomal protein eL39 family. As to quaternary structure, interacts with impact.

The sequence is that of Large ribosomal subunit protein eL39 (rpl39) from Ictalurus punctatus (Channel catfish).